The primary structure comprises 207 residues: Outer-membrane lipoprotein LolB (207 aa).

A signal peptide spans 1–21 (MPLPDFRLIRLLPLAALVLTA). The N-palmitoyl cysteine moiety is linked to residue C22. C22 carries S-diacylglycerol cysteine lipidation.

This sequence belongs to the LolB family. In terms of assembly, monomer.

The protein localises to the cell outer membrane. In terms of biological role, plays a critical role in the incorporation of lipoproteins in the outer membrane after they are released by the LolA protein. This Escherichia coli (strain K12 / MC4100 / BW2952) protein is Outer-membrane lipoprotein LolB.